The following is a 435-amino-acid chain: tRNA modification GTPase MnmE (435 aa).

3 residues coordinate (6S)-5-formyl-5,6,7,8-tetrahydrofolate: Arg24, Glu82, and Lys122. In terms of domain architecture, TrmE-type G spans 219 to 360 (GFIIAIAGPP…LIAEMERRLG (142 aa)). Asn229 serves as a coordination point for K(+). GTP is bound by residues 229-234 (NAGKST), 248-254 (SPVPGTT), and 273-276 (DTAG). Ser233 provides a ligand contact to Mg(2+). K(+) is bound by residues Ser248, Val250, and Thr253. A Mg(2+)-binding site is contributed by Thr254. Lys435 lines the (6S)-5-formyl-5,6,7,8-tetrahydrofolate pocket.

Belongs to the TRAFAC class TrmE-Era-EngA-EngB-Septin-like GTPase superfamily. TrmE GTPase family. As to quaternary structure, homodimer. Heterotetramer of two MnmE and two MnmG subunits. It depends on K(+) as a cofactor.

The protein resides in the cytoplasm. Functionally, exhibits a very high intrinsic GTPase hydrolysis rate. Involved in the addition of a carboxymethylaminomethyl (cmnm) group at the wobble position (U34) of certain tRNAs, forming tRNA-cmnm(5)s(2)U34. This Azorhizobium caulinodans (strain ATCC 43989 / DSM 5975 / JCM 20966 / LMG 6465 / NBRC 14845 / NCIMB 13405 / ORS 571) protein is tRNA modification GTPase MnmE.